The following is a 316-amino-acid chain: Lipoyl synthase (316 aa).

Basic and acidic residues predominate over residues 1–19 (MRDLKIPEQRHPEKAHRPD). Residues 1–31 (MRDLKIPEQRHPEKAHRPDNAQPKKPSWIRV) are disordered. Positions 55, 60, 66, 81, 85, 88, and 295 each coordinate [4Fe-4S] cluster. Residues 67–284 (WSQGHATMMI…EKAAYGKGFL (218 aa)) enclose the Radical SAM core domain.

This sequence belongs to the radical SAM superfamily. Lipoyl synthase family. Requires [4Fe-4S] cluster as cofactor.

The protein resides in the cytoplasm. The enzyme catalyses [[Fe-S] cluster scaffold protein carrying a second [4Fe-4S](2+) cluster] + N(6)-octanoyl-L-lysyl-[protein] + 2 oxidized [2Fe-2S]-[ferredoxin] + 2 S-adenosyl-L-methionine + 4 H(+) = [[Fe-S] cluster scaffold protein] + N(6)-[(R)-dihydrolipoyl]-L-lysyl-[protein] + 4 Fe(3+) + 2 hydrogen sulfide + 2 5'-deoxyadenosine + 2 L-methionine + 2 reduced [2Fe-2S]-[ferredoxin]. Its pathway is protein modification; protein lipoylation via endogenous pathway; protein N(6)-(lipoyl)lysine from octanoyl-[acyl-carrier-protein]: step 2/2. Its function is as follows. Catalyzes the radical-mediated insertion of two sulfur atoms into the C-6 and C-8 positions of the octanoyl moiety bound to the lipoyl domains of lipoate-dependent enzymes, thereby converting the octanoylated domains into lipoylated derivatives. This is Lipoyl synthase from Ruegeria sp. (strain TM1040) (Silicibacter sp.).